Here is a 100-residue protein sequence, read N- to C-terminus: MELTPREKDKLLIFTASLLAERRRARGLKLNYPEAVALISAAVMEGARDGKTVAQLMSEGRTVLTRADVMDGIAELIPDIQVEATFPDGTKLVTVHQPIV.

The protein belongs to the urease gamma subunit family. As to quaternary structure, heterotrimer of UreA (gamma), UreB (beta) and UreC (alpha) subunits. Three heterotrimers associate to form the active enzyme.

It localises to the cytoplasm. It catalyses the reaction urea + 2 H2O + H(+) = hydrogencarbonate + 2 NH4(+). The protein operates within nitrogen metabolism; urea degradation; CO(2) and NH(3) from urea (urease route): step 1/1. This chain is Urease subunit gamma, found in Polaromonas naphthalenivorans (strain CJ2).